A 520-amino-acid polypeptide reads, in one-letter code: T-box transcription factor TBX22 (520 aa).

Residues Met-1–Asp-91 form a disordered region. The span at Pro-33–Ser-49 shows a compositional bias: basic and acidic residues. Low complexity predominate over residues Ser-67–Ser-84. The segment at residues Leu-96–Asp-283 is a DNA-binding region (T-box).

As to expression, seems to be expressed at a low level.

The protein resides in the nucleus. Functionally, probable transcriptional regulator involved in developmental processes. This is major determinant crucial to palatogenesis. In Homo sapiens (Human), this protein is T-box transcription factor TBX22 (TBX22).